Consider the following 258-residue polypeptide: (S)-hydroxynitrile lyase (258 aa).

Positions 5–242 (HFVLIHTICH…GGDHKLQLTK (238 aa)) constitute an AB hydrolase-1 domain. 2-hydroxy-2-methylpropanenitrile contacts are provided by Thr-11 and Ser-80. 3 residues coordinate acetone: Thr-11, Ser-80, and Cys-81. The active-site Proton donor/acceptor is the Ser-80. The active-site Proton donor/acceptor is His-236.

Belongs to the AB hydrolase superfamily. Hydroxynitrile lyase family. Homotetramer.

The enzyme catalyses a monosubstituted aliphatic (S)-hydroxynitrile = an aldehyde + hydrogen cyanide. The catalysed reaction is a disubstituted aliphatic (S)-hydroxynitrile = a ketone + hydrogen cyanide. It carries out the reaction an aromatic (S)-hydroxynitrile = an aromatic aldehyde + hydrogen cyanide. It catalyses the reaction 2-hydroxy-2-methylpropanenitrile = acetone + hydrogen cyanide. The enzyme catalyses butan-2-one + hydrogen cyanide = 2-hydroxy-2-methylbutanenitrile. The catalysed reaction is pentan-2-one + hydrogen cyanide = (2S)-2-hydroxy-2-methylpentanenitrile. It carries out the reaction hexan-2-one + hydrogen cyanide = (2S)-2-hydroxy-2-methylhexanenitrile. It catalyses the reaction heptan-2-one + hydrogen cyanide = (2S)-2-hydroxy-2-methylheptanenitrile. The enzyme catalyses 4-methylpentan-2-one + hydrogen cyanide = (2S)-2-hydroxy-2,4-dimethylpentanenitrile. The catalysed reaction is 3,3-dimethylbutan-2-one + hydrogen cyanide = (2S)-2-hydroxy-2-methyl-3,3-dimethylbutanenitrile. It carries out the reaction acetophenone + hydrogen cyanide = (2S)-2-hydroxy-2-phenylpropanenitrile. It catalyses the reaction propanal + hydrogen cyanide = (2S)-2-hydroxybutanenitrile. The enzyme catalyses pentanal + hydrogen cyanide = (2S)-2-hydroxyhexanenitrile. The catalysed reaction is 2-methylpropanal + hydrogen cyanide = (2S)-2-hydroxy-3-methylbutanenitrile. It carries out the reaction 2,2-dimethylpropanal + hydrogen cyanide = (2S)-2-hydroxy-3,3-dimethylbutanenitrile. It catalyses the reaction acrolein + hydrogen cyanide = (2S)-2-hydroxybut-3-enenitrile. The enzyme catalyses (2E)-but-2-enal + hydrogen cyanide = (2S,3E)-2-hydroxypent-3-enenitrile. The catalysed reaction is (E)-hex-2-enal + hydrogen cyanide = (2S,3E)-2-hydroxyhept-3-enenitrile. It carries out the reaction cyclohexanecarbaldehyde + hydrogen cyanide = (2S)-2-cyclohexyl-2-hydroxyacetonitrile. It catalyses the reaction benzaldehyde + hydrogen cyanide = (S)-mandelonitrile. The enzyme catalyses 4-methoxybenzaldehyde + hydrogen cyanide = (2S)-2-hydroxy-2-(4-methoxyphenyl)acetonitrile. The catalysed reaction is piperonal + hydrogen cyanide = (2S)-2-(2H-1,3-benzodioxol-5-yl)-2-hydroxyacetonitrile. It carries out the reaction formylthiophene + hydrogen cyanide = (2R)-2-hydroxy-2-(thiophen-2-yl)acetonitrile. It catalyses the reaction 3-formylthiophene + hydrogen cyanide = (2S)-2-hydroxy-2-(thiophen-3-yl)acetonitrile. The enzyme catalyses furan-3-carbaldehyde + hydrogen cyanide = (2S)-2-(furan-3-yl)-2-hydroxyacetonitrile. In terms of biological role, involved in cyanogenesis, the release of HCN from cyanogenic glycosides in injured tissues; the release of toxic HCN is believed to play a central role in the defense mechanism of plants against herbivores and microbial attack. Decomposes a variety of cyanohydrins (alpha-hydroxynitriles) into HCN and the corresponding aldehydes or ketones; two natural substrates are 2-hydroxy-2-methylpropanenitrile (acetone cyanohydrin) and 2-hydroxy-2-methylbutanenitrile (2-butanone cyanohydrin), but in vitro can also act on 2-hydroxy-2-methylpentanenitrile (2-pentanone cyanohydrin) and mandelonitrile. Is also able to catalyze the reverse reaction in vitro, leading to the stereospecific synthesis of aliphatic, aromatic, and heterocyclic cyanohydrins, important intermediates in the production of various agrochemicals or pharmaceuticals. This Manihot esculenta (Cassava) protein is (S)-hydroxynitrile lyase.